We begin with the raw amino-acid sequence, 505 residues long: Lysine--tRNA ligase (505 aa).

Mg(2+)-binding residues include Glu-415 and Glu-422.

Belongs to the class-II aminoacyl-tRNA synthetase family. Homodimer. Requires Mg(2+) as cofactor.

Its subcellular location is the cytoplasm. The enzyme catalyses tRNA(Lys) + L-lysine + ATP = L-lysyl-tRNA(Lys) + AMP + diphosphate. The polypeptide is Lysine--tRNA ligase (Salmonella paratyphi C (strain RKS4594)).